Consider the following 678-residue polypeptide: UvrABC system protein B (678 aa).

One can recognise a Helicase ATP-binding domain in the interval 31 to 417 (EGLENGLAHQ…KSGGEIIDQV (387 aa)). 44–51 (GVTGSGKT) is an ATP binding site. The short motif at 97–120 (YYDYYQPEAYVPSSDTFIEKDASI) is the Beta-hairpin element. Residues 436–589 (QVDDLLSEAR…QMKYNEARGI (154 aa)) enclose the Helicase C-terminal domain. The UVR domain occupies 638-673 (QQQIKKLEQQMYKYAQDLEFEKAAAVRDQLQQLREH).

The protein belongs to the UvrB family. As to quaternary structure, forms a heterotetramer with UvrA during the search for lesions. Interacts with UvrC in an incision complex.

It is found in the cytoplasm. Functionally, the UvrABC repair system catalyzes the recognition and processing of DNA lesions. A damage recognition complex composed of 2 UvrA and 2 UvrB subunits scans DNA for abnormalities. Upon binding of the UvrA(2)B(2) complex to a putative damaged site, the DNA wraps around one UvrB monomer. DNA wrap is dependent on ATP binding by UvrB and probably causes local melting of the DNA helix, facilitating insertion of UvrB beta-hairpin between the DNA strands. Then UvrB probes one DNA strand for the presence of a lesion. If a lesion is found the UvrA subunits dissociate and the UvrB-DNA preincision complex is formed. This complex is subsequently bound by UvrC and the second UvrB is released. If no lesion is found, the DNA wraps around the other UvrB subunit that will check the other stand for damage. The chain is UvrABC system protein B from Pasteurella multocida (strain Pm70).